Reading from the N-terminus, the 248-residue chain is Protein maestro (248 aa).

The interval 1–20 (MDQRQRRILGQPLSIPTSQP) is disordered. HEAT repeat units lie at residues 44–79 (EPLK…AREA) and 128–163 (SFFI…AAFA).

The protein localises to the nucleus. Its subcellular location is the nucleolus. The chain is Protein maestro (MRO) from Macaca fascicularis (Crab-eating macaque).